A 208-amino-acid chain; its full sequence is uncharacterized protein (208 aa).

The N-terminal stretch at methionine 1–alanine 16 is a signal peptide. Residue asparagine 79 is glycosylated (N-linked (GlcNAc...) asparagine).

This is an uncharacterized protein from Caenorhabditis elegans.